Here is a 325-residue protein sequence, read N- to C-terminus: Beta-ketoacyl-[acyl-carrier-protein] synthase III (325 aa).

Residues Cys112 and His250 contribute to the active site. Residues 251–255 are ACP-binding; that stretch reads QANSR. The active site involves Asn280.

It belongs to the thiolase-like superfamily. FabH family. In terms of assembly, homodimer.

The protein localises to the cytoplasm. The catalysed reaction is malonyl-[ACP] + acetyl-CoA + H(+) = 3-oxobutanoyl-[ACP] + CO2 + CoA. It participates in lipid metabolism; fatty acid biosynthesis. In terms of biological role, catalyzes the condensation reaction of fatty acid synthesis by the addition to an acyl acceptor of two carbons from malonyl-ACP. Catalyzes the first condensation reaction which initiates fatty acid synthesis and may therefore play a role in governing the total rate of fatty acid production. Possesses both acetoacetyl-ACP synthase and acetyl transacylase activities. Its substrate specificity determines the biosynthesis of branched-chain and/or straight-chain of fatty acids. This Lactococcus lactis subsp. cremoris (strain SK11) protein is Beta-ketoacyl-[acyl-carrier-protein] synthase III.